The following is a 135-amino-acid chain: Large ribosomal subunit protein bL19 (135 aa).

This sequence belongs to the bacterial ribosomal protein bL19 family.

In terms of biological role, this protein is located at the 30S-50S ribosomal subunit interface and may play a role in the structure and function of the aminoacyl-tRNA binding site. This chain is Large ribosomal subunit protein bL19, found in Xanthomonas euvesicatoria pv. vesicatoria (strain 85-10) (Xanthomonas campestris pv. vesicatoria).